A 236-amino-acid polypeptide reads, in one-letter code: 1-(5-phosphoribosyl)-5-[(5-phosphoribosylamino)methylideneamino] imidazole-4-carboxamide isomerase (236 aa).

The Proton acceptor role is filled by Asp-8. Asp-129 functions as the Proton donor in the catalytic mechanism.

It belongs to the HisA/HisF family.

The protein localises to the cytoplasm. It carries out the reaction 1-(5-phospho-beta-D-ribosyl)-5-[(5-phospho-beta-D-ribosylamino)methylideneamino]imidazole-4-carboxamide = 5-[(5-phospho-1-deoxy-D-ribulos-1-ylimino)methylamino]-1-(5-phospho-beta-D-ribosyl)imidazole-4-carboxamide. Its pathway is amino-acid biosynthesis; L-histidine biosynthesis; L-histidine from 5-phospho-alpha-D-ribose 1-diphosphate: step 4/9. In Methanospirillum hungatei JF-1 (strain ATCC 27890 / DSM 864 / NBRC 100397 / JF-1), this protein is 1-(5-phosphoribosyl)-5-[(5-phosphoribosylamino)methylideneamino] imidazole-4-carboxamide isomerase.